We begin with the raw amino-acid sequence, 289 residues long: MIKPGIIMGNLISVTGGFLLAAKGSVDLTLMLMTILGLSLVVASGCGLNNCIDRDIDAKMQRTRNRVTVTGEISVYSVLVFSLALGLIGFGLLAIFTNKIALLFAVIGYLVYVGIYSLYMKRHSVYGTLIGSFSGAVPPVVGYCAVTGEIDTGAVILLLMFSLWQMPHSYAIAIFRYKDYAAAKIPVLPVAKGMTRAKLHIVLYIAVFSLVSALLPLAGYTGIAFMAVTCATSLWWLGMALKGYQRDINLNQWARQVFGCSIVTITALSIAMAMDFQLVVQTPLLTLSN.

Helical transmembrane passes span 1 to 21 (MIKP…FLLA), 28 to 48 (LTLM…GCGL), 76 to 96 (YSVL…LAIF), 100 to 120 (IALL…SLYM), 125 to 145 (VYGT…GYCA), 155 to 175 (VILL…IAIF), 199 to 219 (LHIV…PLAG), 221 to 241 (TGIA…GMAL), and 260 to 280 (CSIV…QLVV).

Belongs to the UbiA prenyltransferase family. Protoheme IX farnesyltransferase subfamily.

It is found in the cell inner membrane. It carries out the reaction heme b + (2E,6E)-farnesyl diphosphate + H2O = Fe(II)-heme o + diphosphate. It functions in the pathway porphyrin-containing compound metabolism; heme O biosynthesis; heme O from protoheme: step 1/1. Functionally, converts heme B (protoheme IX) to heme O by substitution of the vinyl group on carbon 2 of heme B porphyrin ring with a hydroxyethyl farnesyl side group. This chain is Protoheme IX farnesyltransferase 2, found in Shewanella woodyi (strain ATCC 51908 / MS32).